The chain runs to 129 residues: UPF0344 protein SAB0838 (129 aa).

A run of 4 helical transmembrane segments spans residues 1-21 (MLHL…ATYL), 36-56 (LHMV…WILI), 67-87 (MLLT…EVSI), and 99-119 (MFWI…ILPL).

The protein belongs to the UPF0344 family.

It is found in the cell membrane. This Staphylococcus aureus (strain bovine RF122 / ET3-1) protein is UPF0344 protein SAB0838.